A 399-amino-acid chain; its full sequence is Enoyl-[acyl-carrier-protein] reductase [NADH] (399 aa).

NAD(+) is bound by residues 48 to 53 (GASTGY), 74 to 75 (FE), 111 to 112 (DA), and 139 to 140 (LA). Tyr-225 contacts substrate. Tyr-235 (proton donor) is an active-site residue. NAD(+) is bound by residues Lys-244 and 274 to 276 (VVT).

Belongs to the TER reductase family. Monomer.

The enzyme catalyses a 2,3-saturated acyl-[ACP] + NAD(+) = a (2E)-enoyl-[ACP] + NADH + H(+). It participates in lipid metabolism; fatty acid biosynthesis. Involved in the final reduction of the elongation cycle of fatty acid synthesis (FAS II). Catalyzes the reduction of a carbon-carbon double bond in an enoyl moiety that is covalently linked to an acyl carrier protein (ACP). This chain is Enoyl-[acyl-carrier-protein] reductase [NADH], found in Erwinia tasmaniensis (strain DSM 17950 / CFBP 7177 / CIP 109463 / NCPPB 4357 / Et1/99).